Reading from the N-terminus, the 291-residue chain is Inositol-1-monophosphatase (291 aa).

Mg(2+) is bound by residues E83, D104, I106, and D107. Substrate is bound at residue E83. Substrate-binding positions include 106–109 (IDGT), R206, and D235. D235 is a binding site for Mg(2+).

The protein belongs to the inositol monophosphatase superfamily. It depends on Mg(2+) as a cofactor.

It catalyses the reaction a myo-inositol phosphate + H2O = myo-inositol + phosphate. The polypeptide is Inositol-1-monophosphatase (suhB) (Mycobacterium leprae (strain TN)).